A 491-amino-acid polypeptide reads, in one-letter code: 23S rRNA (uracil(1939)-C(5))-methyltransferase RlmD (491 aa).

Residues 1–10 (MSDPTEHPEI) are compositionally biased toward basic and acidic residues. Residues 1–28 (MSDPTEHPEILQDPSSSAPVQGRTDLPP) form a disordered region. One can recognise a TRAM domain in the interval 18 to 81 (APVQGRTDLP…NNWEQASLTA (64 aa)). Residues Cys-94, Cys-104, Cys-107, and Cys-186 each coordinate [4Fe-4S] cluster. 6 residues coordinate S-adenosyl-L-methionine: Gln-294, Phe-323, Asn-328, Glu-344, Asn-379, and Asp-400. Residue Cys-447 is the Nucleophile of the active site.

The protein belongs to the class I-like SAM-binding methyltransferase superfamily. RNA M5U methyltransferase family. RlmD subfamily.

It catalyses the reaction uridine(1939) in 23S rRNA + S-adenosyl-L-methionine = 5-methyluridine(1939) in 23S rRNA + S-adenosyl-L-homocysteine + H(+). Its function is as follows. Catalyzes the formation of 5-methyl-uridine at position 1939 (m5U1939) in 23S rRNA. This is 23S rRNA (uracil(1939)-C(5))-methyltransferase RlmD from Paracidovorax citrulli (strain AAC00-1) (Acidovorax citrulli).